We begin with the raw amino-acid sequence, 358 residues long: Aromatic amino acid aminotransferase (358 aa).

Lysine 214 bears the N6-(pyridoxal phosphate)lysine mark.

The protein belongs to the class-II pyridoxal-phosphate-dependent aminotransferase family. As to quaternary structure, homodimer. It depends on pyridoxal 5'-phosphate as a cofactor.

The catalysed reaction is an aromatic L-alpha-amino acid + 2-oxoglutarate = an aromatic oxo-acid + L-glutamate. Functionally, aminotransferase that catalyzes the conversion of aromatic amino acids and 2-oxoglutarate into corresponding aromatic oxo acids and L-glutamate. The chain is Aromatic amino acid aminotransferase from Rhodococcus erythropolis (strain PR4 / NBRC 100887).